The chain runs to 294 residues: Melanocortin receptor 5 (294 aa).

Residues 1 to 29 are Extracellular-facing; the sequence is FLDLQLNATEGNVSGPSVGNTSSPCEDMG. 3 N-linked (GlcNAc...) asparagine glycosylation sites follow: asparagine 7, asparagine 12, and asparagine 20. The helical transmembrane segment at 30–53 threads the bilayer; sequence IEVEVFLTLGLISLLENILVIGAI. Residues 54-65 lie on the Cytoplasmic side of the membrane; that stretch reads ARNKNLHVPMYF. Residues 66–89 form a helical membrane-spanning segment; it reads FVCSLAVADMLVSLSNSWETITIY. At 90–106 the chain is on the extracellular side; that stretch reads LIANKHLVLSDTSVRHL. A helical membrane pass occupies residues 107–130; that stretch reads DNVFDSMICISLVASMCSLLAVAV. Residues 131 to 147 are Cytoplasmic-facing; it reads DRYVTIFYALRYQHLMT. The helical transmembrane segment at 148–171 threads the bilayer; the sequence is GRRCGAIIAGIWALCTGCGPVFIV. Topologically, residues 172 to 178 are extracellular; sequence YYESTYV. The chain crosses the membrane as a helical span at residues 179-203; that stretch reads VVCLVAMFLTMLLLMASLYAHMFLQ. Over 204–231 the chain is Cytoplasmic; the sequence is ARAHVRRIAALPGYRSARQRTSMKGAVT. A helical membrane pass occupies residues 232–257; that stretch reads LAMLLGVFIVCWAPFFLHLILMISCP. At 258-265 the chain is on the extracellular side; sequence QNLYCSCF. The chain crosses the membrane as a helical span at residues 266 to 289; sequence MSHFNMYLILIMCNSVIDPLIYAF. Topologically, residues 290–294 are cytoplasmic; sequence RSQEK.

Belongs to the G-protein coupled receptor 1 family.

It localises to the cell membrane. Receptor for MSH (alpha, beta and gamma) and ACTH. The activity of this receptor is mediated by G proteins which activate adenylate cyclase. This receptor is a possible mediator of the immunomodulation properties of melanocortins. The protein is Melanocortin receptor 5 (MC5R) of Sus scrofa (Pig).